The following is a 122-amino-acid chain: Large ribosomal subunit protein bL12 (122 aa).

The protein belongs to the bacterial ribosomal protein bL12 family. Homodimer. Part of the ribosomal stalk of the 50S ribosomal subunit. Forms a multimeric L10(L12)X complex, where L10 forms an elongated spine to which 2 to 4 L12 dimers bind in a sequential fashion. Binds GTP-bound translation factors.

Its function is as follows. Forms part of the ribosomal stalk which helps the ribosome interact with GTP-bound translation factors. Is thus essential for accurate translation. This is Large ribosomal subunit protein bL12 from Cellvibrio japonicus (strain Ueda107) (Pseudomonas fluorescens subsp. cellulosa).